Here is an 812-residue protein sequence, read N- to C-terminus: Axin-2 (812 aa).

A disordered region spans residues Met-1 to Lys-43. One can recognise an RGS domain in the interval Ser-84–Val-203. 4 disordered regions span residues Ser-275–Pro-326, Glu-388–Glu-430, Thr-446–Asn-484, and Arg-609–His-726. The segment covering Asn-285–Glu-303 has biased composition (polar residues). Residues Ser-305–Ala-323 show a composition bias toward low complexity. Positions Leu-329 to Ser-415 are interaction with GSK3B. A compositionally biased stretch (basic and acidic residues) spans Glu-388–Leu-397. Residues Gln-401–Glu-410 are compositionally biased toward acidic residues. Low complexity predominate over residues Met-411–Pro-421. Positions Ser-415–Arg-467 are interaction with beta-catenin. Residues Ser-475–Asn-484 show a composition bias toward polar residues. The span at Glu-672–Lys-683 shows a compositional bias: basic and acidic residues. Residues Gly-730–Asp-812 enclose the DIX domain.

As to quaternary structure, interacts with hwa; leading to promote the tankyrase-mediated degradation of axin1. Post-translationally, ADP-ribosylated by tankyrase tnks and tnks2. Poly-ADP-ribosylated protein is recognized by rnf146, followed by ubiquitination and subsequent activation of the Wnt signaling pathway. In terms of processing, ubiquitinated by rnf146 when poly-ADP-ribosylated, leading to its degradation and subsequent activation of the Wnt signaling pathway.

The protein localises to the cytoplasm. Functionally, component of the beta-catenin destruction complex required for regulating ctnnb1 levels through phosphorylation and ubiquitination, and modulating Wnt-signaling. Controls dorsoventral patterning by down-regulating ctnnb1 to inhibit the Wnt signaling pathway and ventralize embryos. The protein is Axin-2 (axin2) of Danio rerio (Zebrafish).